Reading from the N-terminus, the 1260-residue chain is uncharacterized protein (1260 aa).

This sequence belongs to the oxoprolinase family.

This is an uncharacterized protein from Schizosaccharomyces pombe (strain 972 / ATCC 24843) (Fission yeast).